Consider the following 424-residue polypeptide: Glutamyl-tRNA(Gln) amidotransferase subunit D (424 aa).

The interval 56–78 (GETANGSRNGGKGCKTNEEELPE) is disordered. The Asparaginase/glutaminase domain occupies 84–413 (PKIAILSTGG…EKAAGMLRED (330 aa)). Active-site residues include Thr94, Thr170, Asp171, and Lys247.

Belongs to the asparaginase 1 family. GatD subfamily. Heterodimer of GatD and GatE.

The enzyme catalyses L-glutamyl-tRNA(Gln) + L-glutamine + ATP + H2O = L-glutaminyl-tRNA(Gln) + L-glutamate + ADP + phosphate + H(+). Functionally, allows the formation of correctly charged Gln-tRNA(Gln) through the transamidation of misacylated Glu-tRNA(Gln) in organisms which lack glutaminyl-tRNA synthetase. The reaction takes place in the presence of glutamine and ATP through an activated gamma-phospho-Glu-tRNA(Gln). The GatDE system is specific for glutamate and does not act on aspartate. The protein is Glutamyl-tRNA(Gln) amidotransferase subunit D of Methanosarcina acetivorans (strain ATCC 35395 / DSM 2834 / JCM 12185 / C2A).